A 69-amino-acid chain; its full sequence is uncharacterized protein (69 aa).

2 4Fe-4S ferredoxin-type domains span residues 2–30 (KIEINENFCKGCDICIVVCPRGVFEKSKK) and 38–67 (PPIPVNPEKCTKCNLCILQCPDQAISIELS). Residues Cys10, Cys13, Cys16, Cys20, Cys47, Cys50, Cys53, and Cys57 each coordinate [4Fe-4S] cluster.

Requires [4Fe-4S] cluster as cofactor.

This is an uncharacterized protein from Methanocaldococcus jannaschii (strain ATCC 43067 / DSM 2661 / JAL-1 / JCM 10045 / NBRC 100440) (Methanococcus jannaschii).